We begin with the raw amino-acid sequence, 133 residues long: Large ribosomal subunit protein bL19 (133 aa).

The protein belongs to the bacterial ribosomal protein bL19 family.

Functionally, this protein is located at the 30S-50S ribosomal subunit interface and may play a role in the structure and function of the aminoacyl-tRNA binding site. In Sulfurihydrogenibium sp. (strain YO3AOP1), this protein is Large ribosomal subunit protein bL19.